The following is a 194-amino-acid chain: Imidazoleglycerol-phosphate dehydratase (194 aa).

This sequence belongs to the imidazoleglycerol-phosphate dehydratase family.

The protein localises to the cytoplasm. The catalysed reaction is D-erythro-1-(imidazol-4-yl)glycerol 3-phosphate = 3-(imidazol-4-yl)-2-oxopropyl phosphate + H2O. Its pathway is amino-acid biosynthesis; L-histidine biosynthesis; L-histidine from 5-phospho-alpha-D-ribose 1-diphosphate: step 6/9. The polypeptide is Imidazoleglycerol-phosphate dehydratase (Bacillus thuringiensis (strain Al Hakam)).